A 62-amino-acid chain; its full sequence is Translational regulator CsrA 3 (62 aa).

The protein belongs to the CsrA/RsmA family. In terms of assembly, homodimer; the beta-strands of each monomer intercalate to form a hydrophobic core, while the alpha-helices form wings that extend away from the core.

Its subcellular location is the cytoplasm. A key translational regulator that binds mRNA to regulate translation initiation and/or mRNA stability. Mediates global changes in gene expression, shifting from rapid growth to stress survival by linking envelope stress, the stringent response and the catabolite repression systems. Usually binds in the 5'-UTR; binding at or near the Shine-Dalgarno sequence prevents ribosome-binding, repressing translation, binding elsewhere in the 5'-UTR can activate translation and/or stabilize the mRNA. Its function is antagonized by small RNA(s). The polypeptide is Translational regulator CsrA 3 (Pseudomonas syringae pv. tomato (strain ATCC BAA-871 / DC3000)).